Here is a 149-residue protein sequence, read N- to C-terminus: Calmodulin (149 aa).

N-acetylthreonine is present on Thr2. EF-hand domains lie at Glu8 to Asn43, Pro44 to Glu79, Asp81 to Lys116, and Leu117 to Lys149. Ca(2+) is bound by residues Asp21, Asp23, Asp25, Thr27, Glu32, Asp57, Asp59, Asn61, Thr63, Glu68, Asp94, Asp96, Asn98, and Glu105. Lys116 carries the N6,N6,N6-trimethyllysine modification. Asp130, Asp132, Asp134, Gln136, and Glu141 together coordinate Ca(2+).

This sequence belongs to the calmodulin family.

Functionally, calmodulin mediates the control of a large number of enzymes, ion channels and other proteins by Ca(2+). Among the enzymes to be stimulated by the calmodulin-Ca(2+) complex are a number of protein kinases and phosphatases. The polypeptide is Calmodulin (Halichondria okadai (Marine sponge)).